Reading from the N-terminus, the 267-residue chain is Large ribosomal subunit protein uL4 (267 aa).

It belongs to the universal ribosomal protein uL4 family. Part of the 50S ribosomal subunit.

In terms of biological role, one of the primary rRNA binding proteins, this protein initially binds near the 5'-end of the 23S rRNA. It is important during the early stages of 50S assembly. It makes multiple contacts with different domains of the 23S rRNA in the assembled 50S subunit and ribosome. Functionally, forms part of the polypeptide exit tunnel. This chain is Large ribosomal subunit protein uL4, found in Saccharolobus solfataricus (strain ATCC 35092 / DSM 1617 / JCM 11322 / P2) (Sulfolobus solfataricus).